Here is a 164-residue protein sequence, read N- to C-terminus: NADH-quinone oxidoreductase subunit I (164 aa).

4Fe-4S ferredoxin-type domains lie at 55–85 and 95–124; these read LRRYPNGEERCIACKLCEAICPAQAITIDAE and TRYDIDMTKCIYCGFCQEACPVDAIVEGPN. Residues cysteine 65, cysteine 68, cysteine 71, cysteine 75, cysteine 104, cysteine 107, cysteine 110, and cysteine 114 each contribute to the [4Fe-4S] cluster site.

It belongs to the complex I 23 kDa subunit family. In terms of assembly, NDH-1 is composed of 14 different subunits. Subunits NuoA, H, J, K, L, M, N constitute the membrane sector of the complex. Requires [4Fe-4S] cluster as cofactor.

Its subcellular location is the cell inner membrane. It carries out the reaction a quinone + NADH + 5 H(+)(in) = a quinol + NAD(+) + 4 H(+)(out). Its function is as follows. NDH-1 shuttles electrons from NADH, via FMN and iron-sulfur (Fe-S) centers, to quinones in the respiratory chain. The immediate electron acceptor for the enzyme in this species is believed to be ubiquinone. Couples the redox reaction to proton translocation (for every two electrons transferred, four hydrogen ions are translocated across the cytoplasmic membrane), and thus conserves the redox energy in a proton gradient. The chain is NADH-quinone oxidoreductase subunit I from Jannaschia sp. (strain CCS1).